Consider the following 619-residue polypeptide: TBC domain-containing protein C1952.17c (619 aa).

In terms of domain architecture, Rab-GAP TBC spans 34 to 387; sequence PDEYSLRAKA…RLWDSIIADQ (354 aa).

The protein localises to the cytoplasm. In terms of biological role, may act as a GTPase-activating protein for Rab family protein(s). The sequence is that of TBC domain-containing protein C1952.17c from Schizosaccharomyces pombe (strain 972 / ATCC 24843) (Fission yeast).